We begin with the raw amino-acid sequence, 202 residues long: Peptide methionine sulfoxide reductase B1, chloroplastic (202 aa).

Residues 1–63 (MASSTRLTII…SSSPKPDNVQ (63 aa)) constitute a chloroplast transit peptide. Residues 48–67 (YSMGSSSSSPKPDNVQEAEK) form a disordered region. The 123-residue stretch at 75–197 (ENEWKKRLTP…NSAALKLNAL (123 aa)) folds into the MsrB domain. Zn(2+)-binding residues include Cys-114, Cys-117, Cys-163, and Cys-166. Catalysis depends on Cys-186, which acts as the Nucleophile.

The protein belongs to the MsrB Met sulfoxide reductase family. Requires Zn(2+) as cofactor. In terms of tissue distribution, expressed at low levels in stems, leaves, floral buds, flowers and siliques (at protein level).

It is found in the plastid. The protein resides in the chloroplast. It catalyses the reaction L-methionyl-[protein] + [thioredoxin]-disulfide + H2O = L-methionyl-(R)-S-oxide-[protein] + [thioredoxin]-dithiol. Functionally, catalyzes the reduction of methionine sulfoxide (MetSO) to methionine in proteins. Specifically reduces the MetSO R-enantiomer. Plays a protective role against oxidative stress by restoring activity to proteins that have been inactivated by methionine oxidation. May play an essential function in association with MSRB2 in maintaining vegetative growth during environmental constraints, through the preservation of photosynthetic antennae. MSRB1 and MSRB2 account for most of the leaf peptide MSR capacity. This chain is Peptide methionine sulfoxide reductase B1, chloroplastic, found in Arabidopsis thaliana (Mouse-ear cress).